The sequence spans 356 residues: Epoxide hydrolase B (356 aa).

The AB hydrolase-1 domain occupies 28–129 (PLVVLLHGFP…RCAGVVGISV (102 aa)). Catalysis depends on D104, which acts as the Nucleophile. H333 acts as the Proton acceptor in catalysis.

Belongs to the AB hydrolase superfamily. Epoxide hydrolase family. Homodimer.

The catalysed reaction is an epoxide + H2O = an ethanediol. Could be involved in detoxification of extraneous host-cell epoxides. Catalyzes the hydrolysis of small aromatic epoxide-containing substrates such as trans-1,3-diphenylpropene oxide, trans and cis-stilbene oxide, and terpenoid epoxide. The protein is Epoxide hydrolase B of Mycobacterium tuberculosis (strain CDC 1551 / Oshkosh).